The sequence spans 267 residues: Putative carbamate hydrolase RutD (267 aa).

In terms of domain architecture, AB hydrolase-1 spans 14–115 (PTLVLSAGLG…EKLVVVNGWP (102 aa)).

It belongs to the AB hydrolase superfamily. Hydrolase RutD family.

It catalyses the reaction carbamate + 2 H(+) = NH4(+) + CO2. Functionally, involved in pyrimidine catabolism. May facilitate the hydrolysis of carbamate, a reaction that can also occur spontaneously. This chain is Putative carbamate hydrolase RutD, found in Serratia proteamaculans (strain 568).